The sequence spans 216 residues: Pyridoxine/pyridoxamine 5'-phosphate oxidase (216 aa).

Residues 9–12 (RLSY) and Arg-67 contribute to the substrate site. FMN-binding positions include 62–67 (RIVLLR), 77–78 (YT), Lys-84, and Gln-106. Residues Tyr-124, Arg-128, and Ser-132 each coordinate substrate. FMN is bound by residues 142–143 (QS) and Trp-188. 194–196 (RMH) provides a ligand contact to substrate. Residue Arg-198 coordinates FMN.

It belongs to the pyridoxamine 5'-phosphate oxidase family. In terms of assembly, homodimer. It depends on FMN as a cofactor.

It catalyses the reaction pyridoxamine 5'-phosphate + O2 + H2O = pyridoxal 5'-phosphate + H2O2 + NH4(+). The catalysed reaction is pyridoxine 5'-phosphate + O2 = pyridoxal 5'-phosphate + H2O2. The protein operates within cofactor metabolism; pyridoxal 5'-phosphate salvage; pyridoxal 5'-phosphate from pyridoxamine 5'-phosphate: step 1/1. Its pathway is cofactor metabolism; pyridoxal 5'-phosphate salvage; pyridoxal 5'-phosphate from pyridoxine 5'-phosphate: step 1/1. Catalyzes the oxidation of either pyridoxine 5'-phosphate (PNP) or pyridoxamine 5'-phosphate (PMP) into pyridoxal 5'-phosphate (PLP). The protein is Pyridoxine/pyridoxamine 5'-phosphate oxidase of Psychrobacter cryohalolentis (strain ATCC BAA-1226 / DSM 17306 / VKM B-2378 / K5).